A 349-amino-acid polypeptide reads, in one-letter code: Eukaryotic translation initiation factor 3 subunit I (349 aa).

WD repeat units lie at residues 8-49 (GHER…GTLE), 51-91 (HIGT…QSWE), 93-135 (PTPV…DYTK), 148-187 (SDAK…FIET), 197-239 (EKIA…KVYK), and 295-336 (GHFG…FEFD).

This sequence belongs to the eIF-3 subunit I family. As to quaternary structure, component of the eukaryotic translation initiation factor 3 (eIF-3) complex.

It localises to the cytoplasm. Component of the eukaryotic translation initiation factor 3 (eIF-3) complex, which is involved in protein synthesis of a specialized repertoire of mRNAs and, together with other initiation factors, stimulates binding of mRNA and methionyl-tRNAi to the 40S ribosome. The eIF-3 complex specifically targets and initiates translation of a subset of mRNAs involved in cell proliferation. This chain is Eukaryotic translation initiation factor 3 subunit I, found in Debaryomyces hansenii (strain ATCC 36239 / CBS 767 / BCRC 21394 / JCM 1990 / NBRC 0083 / IGC 2968) (Yeast).